Reading from the N-terminus, the 330-residue chain is Glycerol-3-phosphate dehydrogenase [NAD(P)+] (330 aa).

4 residues coordinate NADPH: S10, W11, R31, and K105. 3 residues coordinate sn-glycerol 3-phosphate: K105, G135, and S137. A139 provides a ligand contact to NADPH. Sn-glycerol 3-phosphate is bound by residues K190, D243, S253, R254, and N255. The active-site Proton acceptor is the K190. Residue R254 coordinates NADPH. Residues V278 and E280 each contribute to the NADPH site.

It belongs to the NAD-dependent glycerol-3-phosphate dehydrogenase family.

It is found in the cytoplasm. The enzyme catalyses sn-glycerol 3-phosphate + NAD(+) = dihydroxyacetone phosphate + NADH + H(+). The catalysed reaction is sn-glycerol 3-phosphate + NADP(+) = dihydroxyacetone phosphate + NADPH + H(+). Its pathway is membrane lipid metabolism; glycerophospholipid metabolism. Catalyzes the reduction of the glycolytic intermediate dihydroxyacetone phosphate (DHAP) to sn-glycerol 3-phosphate (G3P), the key precursor for phospholipid synthesis. The polypeptide is Glycerol-3-phosphate dehydrogenase [NAD(P)+] (Nitratidesulfovibrio vulgaris (strain ATCC 29579 / DSM 644 / CCUG 34227 / NCIMB 8303 / VKM B-1760 / Hildenborough) (Desulfovibrio vulgaris)).